Consider the following 104-residue polypeptide: Large ribosomal subunit protein uL24 (104 aa).

It belongs to the universal ribosomal protein uL24 family. Part of the 50S ribosomal subunit. Post-translationally, a methylated and unmethylated form are thought to exist.

One of two assembly initiator proteins, it binds directly to the 5'-end of the 23S rRNA, where it nucleates assembly of the 50S subunit. Its function is as follows. One of the proteins that surrounds the polypeptide exit tunnel on the outside of the subunit. The sequence is that of Large ribosomal subunit protein uL24 from Rhodopseudomonas palustris (strain ATCC BAA-98 / CGA009).